A 258-amino-acid chain; its full sequence is Serine protease sp-Eoc49 (258 aa).

The signal sequence occupies residues 1 to 18 (MVLIRVLANLLVLQLSYA). The 225-residue stretch at 25-249 (VVGGGECNRN…YTDWIQSIIA (225 aa)) folds into the Peptidase S1 domain. An N-linked (GlcNAc...) asparagine glycan is attached at asparagine 44. Cysteine 50 and cysteine 66 form a disulfide bridge. Histidine 65 serves as the catalytic Charge relay system. 2 N-linked (GlcNAc...) asparagine glycosylation sites follow: asparagine 79 and asparagine 103. Aspartate 110 acts as the Charge relay system in catalysis. Cystine bridges form between cysteine 142-cysteine 210, cysteine 174-cysteine 189, and cysteine 200-cysteine 225. Asparagine 154 carries N-linked (GlcNAc...) asparagine glycosylation. The Charge relay system role is filled by serine 204. N-linked (GlcNAc...) asparagine glycosylation occurs at asparagine 251.

Belongs to the peptidase S1 family. Snake venom subfamily. As to quaternary structure, monomer. In terms of tissue distribution, expressed by the venom gland.

It is found in the secreted. In terms of biological role, snake venom serine protease that may act in the hemostasis system of the prey. This Echis ocellatus (Ocellated saw-scaled viper) protein is Serine protease sp-Eoc49.